Consider the following 358-residue polypeptide: Glyoxylate/succinic semialdehyde reductase 2, chloroplastic (358 aa).

The N-terminal 44 residues, 1-44, are a transit peptide targeting the chloroplast; it reads MPLVSLSFASSSSKAMALCSICPRIPLRFRPKPISPFLSKPQIC. Residues 70–84 and Thr-161 each bind NADP(+); that span reads GFLG…MAQN. Residue Lys-236 is part of the active site. Lys-304 serves as a coordination point for NADP(+).

The protein belongs to the HIBADH-related family. NP60 subfamily.

The protein localises to the plastid. Its subcellular location is the chloroplast stroma. It carries out the reaction glycolate + NADP(+) = glyoxylate + NADPH + H(+). The enzyme catalyses 4-hydroxybutanoate + NADP(+) = succinate semialdehyde + NADPH + H(+). With respect to regulation, the ratio of NADPH/NADP(+) may regulate enzymatic activity. Functionally, catalyzes the NADPH-dependent reduction of glyoxylate to glycolate as well as succinic semialdehyde (SSA) to gamma-hydroxybutyrate in vitro. May function in redox homeostasis and play a role in oxidative stress tolerance by detoxifying glyoxylate and SSA generated in glycolate metabolism and GABA metabolism, respectively. The protein is Glyoxylate/succinic semialdehyde reductase 2, chloroplastic (GLYR2) of Arabidopsis thaliana (Mouse-ear cress).